The following is a 78-amino-acid chain: Large ribosomal subunit protein bL28 (78 aa).

The tract at residues 1 to 20 (MSRVCQVTGKRPVTGNNRSH) is disordered.

This sequence belongs to the bacterial ribosomal protein bL28 family.

This Photobacterium profundum (strain SS9) protein is Large ribosomal subunit protein bL28.